We begin with the raw amino-acid sequence, 205 residues long: Small ribosomal subunit protein uS4 (205 aa).

The segment covering 1 to 16 (MSKRESSKYKIDRRMG) has biased composition (basic and acidic residues). The tract at residues 1–46 (MSKRESSKYKIDRRMGENIWGRPKSPVNRREYGPGQHGQRRKGKLS) is disordered. The S4 RNA-binding domain occupies 94-157 (SRLDAIVYRA…KQLVIVLEAV (64 aa)).

Belongs to the universal ribosomal protein uS4 family. Part of the 30S ribosomal subunit. Contacts protein S5. The interaction surface between S4 and S5 is involved in control of translational fidelity.

Functionally, one of the primary rRNA binding proteins, it binds directly to 16S rRNA where it nucleates assembly of the body of the 30S subunit. In terms of biological role, with S5 and S12 plays an important role in translational accuracy. The polypeptide is Small ribosomal subunit protein uS4 (Rhizobium leguminosarum bv. trifolii (strain WSM2304)).